We begin with the raw amino-acid sequence, 1158 residues long: ATP-dependent helicase/deoxyribonuclease subunit B (1158 aa).

This sequence belongs to the helicase family. AddB/RexB type 2 subfamily. As to quaternary structure, heterodimer of AddA and RexB. The cofactor is Mg(2+).

Functionally, the heterodimer acts as both an ATP-dependent DNA helicase and an ATP-dependent, dual-direction single-stranded exonuclease. Recognizes the chi site generating a DNA molecule suitable for the initiation of homologous recombination. This subunit has 5' -&gt; 3' nuclease activity but not helicase activity. In Lactobacillus gasseri (strain ATCC 33323 / DSM 20243 / BCRC 14619 / CIP 102991 / JCM 1131 / KCTC 3163 / NCIMB 11718 / NCTC 13722 / AM63), this protein is ATP-dependent helicase/deoxyribonuclease subunit B.